A 244-amino-acid polypeptide reads, in one-letter code: 5'-nucleotidase SurE 2 (244 aa).

A divalent metal cation is bound by residues aspartate 8, aspartate 9, serine 39, and asparagine 96.

Belongs to the SurE nucleotidase family. It depends on a divalent metal cation as a cofactor.

It localises to the cytoplasm. The catalysed reaction is a ribonucleoside 5'-phosphate + H2O = a ribonucleoside + phosphate. Functionally, nucleotidase that shows phosphatase activity on nucleoside 5'-monophosphates. This is 5'-nucleotidase SurE 2 from Thermus thermophilus (strain ATCC BAA-163 / DSM 7039 / HB27).